Reading from the N-terminus, the 342-residue chain is uncharacterized protein (342 aa).

Arg-69 serves as a coordination point for substrate. The active-site Proton donor is the His-176. Asp-240 contacts substrate.

This sequence belongs to the aldose epimerase family.

This is an uncharacterized protein from Saccharomyces cerevisiae (strain ATCC 204508 / S288c) (Baker's yeast).